Here is a 169-residue protein sequence, read N- to C-terminus: Oleosin Ara h 10.0101 (169 aa).

2 consecutive transmembrane segments (helical) span residues Val-39–Ala-59 and Leu-73–Ala-93. A compositionally biased stretch (basic and acidic residues) spans Lys-146–Gly-156. Residues Lys-146 to Thr-169 are disordered.

Belongs to the oleosin family. As to expression, expressed in seeds (at protein level).

The protein localises to the lipid droplet. The protein resides in the membrane. Its function is as follows. May have a structural role to stabilize the lipid body during desiccation of the seed by preventing coalescence of the oil. Probably interacts with both lipid and phospholipid moieties of lipid bodies. May also provide recognition signals for specific lipase anchorage in lipolysis during seedling growth. This is Oleosin Ara h 10.0101 from Arachis hypogaea (Peanut).